The chain runs to 824 residues: Disintegrin and metalloproteinase domain-containing protein 17 (824 aa).

Residues 1–17 form the signal peptide; it reads MRQSLLFLTSVVPFVLA. Positions 18 to 214 are excised as a propeptide; it reads PRPPDDPGFG…PEELVHRVKR (197 aa). N-linked (GlcNAc...) asparagine glycans are attached at residues Asn-103, Asn-157, and Asn-174. Positions 182–189 match the Cysteine switch motif; it reads KVCGYLKV. A Zn(2+)-binding site is contributed by Cys-184. Over 215–671 the chain is Extracellular; sequence RADPDPMKNT…NTFGKFLADN (457 aa). Residues 223–474 form the Peptidase M12B domain; that stretch reads NTCKLLVVAD…KAQECFQERS (252 aa). 3 disulfide bridges follow: Cys-225–Cys-333, Cys-365–Cys-469, and Cys-423–Cys-453. The N-linked (GlcNAc...) asparagine glycan is linked to Asn-264. Residue His-405 participates in Zn(2+) binding. Glu-406 is an active-site residue. Positions 409 and 415 each coordinate Zn(2+). N-linked (GlcNAc...) asparagine glycans are attached at residues Asn-452, Asn-498, Asn-539, and Asn-551. A Disintegrin domain is found at 475–563; sequence NKVCGNSRVD…ECPPPGNAED (89 aa). Cystine bridges form between Cys-534/Cys-555, Cys-573/Cys-582, Cys-578/Cys-591, and Cys-593/Cys-600. Asn-594 is a glycosylation site (N-linked (GlcNAc...) asparagine). Positions 603–671 are crambin-like; it reads CCRDLSGRCV…NTFGKFLADN (69 aa). A helical transmembrane segment spans residues 672–692; that stretch reads IVGSVLVFSLIFWIPFSILVH. Residues 693–824 lie on the Cytoplasmic side of the membrane; sequence CVDKKLDKQY…NRVDSKETEC (132 aa). Short sequence motifs (SH3-binding) lie at residues 731-738 and 741-748; these read PAPQTPGR and PAPVIPSA. The disordered stretch occupies residues 732–824; the sequence is APQTPGRLQP…NRVDSKETEC (93 aa). Position 735 is a phosphothreonine; by MAPK14 (Thr-735). The span at 741-752 shows a compositional bias: low complexity; it reads PAPVIPSAPAAP. Thr-761 bears the Phosphothreonine mark. Phosphoserine is present on Ser-767. Composition is skewed to basic and acidic residues over residues 768–781, 791–807, and 815–824; these read TDSH…EKDP, SFED…EKAA, and NRVDSKETEC. Phosphoserine occurs at positions 791 and 819.

As to quaternary structure, interacts with MAD2L1, MAPK14 and MUC1. Interacts with iRhom1/RHBDF1 and iRhom2/RHBDF2. Interacts with FRMD8 via its interaction with iRhom1/RHBDF1 and iRhom2/RHBDF2. Interacts with TSPAN8. Requires Zn(2+) as cofactor. Post-translationally, the precursor is cleaved by a furin endopeptidase. In terms of processing, phosphorylated. Stimulation by growth factor or phorbol 12-myristate 13-acetate induces phosphorylation of Ser-819 but decreases phosphorylation of Ser-791. Phosphorylation at Thr-735 by MAPK14 is required for ADAM17-mediated ectodomain shedding. As to expression, ubiquitously expressed. Expressed at highest levels in adult heart, placenta, skeletal muscle, pancreas, spleen, thymus, prostate, testes, ovary and small intestine, and in fetal brain, lung, liver and kidney. Expressed in natural killer cells (at protein level).

Its subcellular location is the cell membrane. The catalysed reaction is Narrow endopeptidase specificity. Cleaves Pro-Leu-Ala-Gln-Ala-|-Val-Arg-Ser-Ser-Ser in the membrane-bound, 26-kDa form of tumor necrosis factor alpha (TNFalpha). Similarly cleaves other membrane-anchored, cell-surface proteins to 'shed' the extracellular domains.. Functionally, transmembrane metalloprotease which mediates the ectodomain shedding of a myriad of transmembrane proteins including adhesion proteins, growth factor precursors and cytokines important for inflammation and immunity. Cleaves the membrane-bound precursor of TNF-alpha to its mature soluble form. Responsible for the proteolytical release of soluble JAM3 from endothelial cells surface. Responsible for the proteolytic release of several other cell-surface proteins, including p75 TNF-receptor, interleukin 1 receptor type II, p55 TNF-receptor, transforming growth factor-alpha, L-selectin, growth hormone receptor, MUC1 and the amyloid precursor protein. Acts as an activator of Notch pathway by mediating cleavage of Notch, generating the membrane-associated intermediate fragment called Notch extracellular truncation (NEXT). Plays a role in the proteolytic processing of ACE2. Plays a role in hemostasis through shedding of GP1BA, the platelet glycoprotein Ib alpha chain. Mediates the proteolytic cleavage of LAG3, leading to release the secreted form of LAG3. Mediates the proteolytic cleavage of IL6R, leading to the release of secreted form of IL6R. Mediates the proteolytic cleavage and shedding of FCGR3A upon NK cell stimulation, a mechanism that allows for increased NK cell motility and detachment from opsonized target cells. Cleaves TREM2, resulting in shedding of the TREM2 ectodomain. This chain is Disintegrin and metalloproteinase domain-containing protein 17, found in Homo sapiens (Human).